The sequence spans 152 residues: Xanthine-guanine phosphoribosyltransferase (152 aa).

Residues 37 to 38 (RG) and 88 to 96 (DDLVDTGGT) contribute to the 5-phospho-alpha-D-ribose 1-diphosphate site. Mg(2+) is bound at residue aspartate 89. The guanine site is built by aspartate 92 and isoleucine 135. Aspartate 92 and isoleucine 135 together coordinate xanthine. GMP-binding positions include 92–96 (DTGGT) and 134–135 (WI).

The protein belongs to the purine/pyrimidine phosphoribosyltransferase family. XGPT subfamily. Homotetramer. It depends on Mg(2+) as a cofactor.

It localises to the cell inner membrane. The catalysed reaction is GMP + diphosphate = guanine + 5-phospho-alpha-D-ribose 1-diphosphate. It catalyses the reaction XMP + diphosphate = xanthine + 5-phospho-alpha-D-ribose 1-diphosphate. It carries out the reaction IMP + diphosphate = hypoxanthine + 5-phospho-alpha-D-ribose 1-diphosphate. It participates in purine metabolism; GMP biosynthesis via salvage pathway; GMP from guanine: step 1/1. The protein operates within purine metabolism; XMP biosynthesis via salvage pathway; XMP from xanthine: step 1/1. In terms of biological role, purine salvage pathway enzyme that catalyzes the transfer of the ribosyl-5-phosphate group from 5-phospho-alpha-D-ribose 1-diphosphate (PRPP) to the N9 position of the 6-oxopurines guanine and xanthine to form the corresponding ribonucleotides GMP (guanosine 5'-monophosphate) and XMP (xanthosine 5'-monophosphate), with the release of PPi. To a lesser extent, also acts on hypoxanthine. This chain is Xanthine-guanine phosphoribosyltransferase, found in Yersinia enterocolitica serotype O:8 / biotype 1B (strain NCTC 13174 / 8081).